Here is a 716-residue protein sequence, read N- to C-terminus: Polyribonucleotide nucleotidyltransferase (716 aa).

Residues Asp-486 and Asp-492 each coordinate Mg(2+). The 60-residue stretch at 553 to 612 folds into the KH domain; that stretch reads PHIYNIKINPEKIKDVIGKGGAVIRALSDETDTKIDISDDGNITIAALSQKSAAFAQQRI. Positions 622–690 constitute an S1 motif domain; it reads GRIYQGTVTR…RQGRIRLSIK (69 aa).

Belongs to the polyribonucleotide nucleotidyltransferase family. As to quaternary structure, component of the RNA degradosome, which is a multiprotein complex involved in RNA processing and mRNA degradation. The cofactor is Mg(2+).

The protein resides in the cytoplasm. It catalyses the reaction RNA(n+1) + phosphate = RNA(n) + a ribonucleoside 5'-diphosphate. In terms of biological role, involved in mRNA degradation. Catalyzes the phosphorolysis of single-stranded polyribonucleotides processively in the 3'- to 5'-direction. The polypeptide is Polyribonucleotide nucleotidyltransferase (Hamiltonella defensa subsp. Acyrthosiphon pisum (strain 5AT)).